The sequence spans 581 residues: Leucine-rich repeat transmembrane neuronal protein 3 (581 aa).

A signal peptide spans 1–30 (MGFNVIRLLSGSAVALVIAPTVLLTMLSSA). An LRRNT domain is found at 31 to 61 (ERGCPKGCRCEGKMVYCESQKLQEIPSSISA). Over 31–419 (ERGCPKGCRC…ADAEHISFHK (389 aa)) the chain is Extracellular. 10 LRR repeats span residues 63 to 83 (CLGLSLRYNSLQKLKYNQFKG), 86 to 107 (QLTWLYLDHNHISNIDENAFNG), 110 to 131 (RLKELILSSNRISYFLNNTFRP), 134 to 155 (NLRNLDLSYNQLHSLGSEQFRG), 158 to 179 (KLLSLHLRSNSLRTIPVRIFQD), 182 to 203 (NLELLDLGYNRIRSLARNVFAG), 206 to 226 (RLKELHLEHNQFSKLNLALFP), 230 to 251 (SLQNLYLQWNKISVIGQTMSWT), 254 to 275 (SLQRLDLSGNEIEAFSGPSVFQ), and 279 to 300 (NLQRLNLDSNKLTFIGQEILDS). Residue Asn126 is glycosylated (N-linked (GlcNAc...) asparagine). Residues 312–363 (NIWECSRNICSLVNWLKSFKGLRENTIICASPKELQGVNVIDAVKNYSICGK) form the LRRCT domain. Residue Asn357 is glycosylated (N-linked (GlcNAc...) asparagine). Positions 377–408 (KPTFKPKLPRPKHESKPPLPPTVGATEPGPET) are disordered. The helical transmembrane segment at 420–440 (IIAGSVALFLSVLVILLVIYV) threads the bilayer. The Cytoplasmic portion of the chain corresponds to 441 to 581 (SWKRYPASMK…RISDHKQQLA (141 aa)).

It belongs to the LRRTM family. As to expression, expressed in neuronal tissues.

It is found in the cell membrane. The protein localises to the postsynaptic cell membrane. In terms of biological role, exhibits a limited synaptogenic activity in vitro, restricted to excitatory presynaptic differentiation. May play a role in the development and maintenance of the vertebrate nervous system. This Homo sapiens (Human) protein is Leucine-rich repeat transmembrane neuronal protein 3 (LRRTM3).